The following is a 168-amino-acid chain: uncharacterized protein (168 aa).

Residues 1–10 (MSPTTGPQPN) are compositionally biased toward pro residues. 2 disordered regions span residues 1–23 (MSPTTGPQPNPRAWECHHTTGPQ) and 117–143 (EPGNVTVKRGPQPNPRAWECHRTRGPQ).

This is an uncharacterized protein from Homo sapiens (Human).